Reading from the N-terminus, the 477-residue chain is Cysteine--tRNA ligase (477 aa).

Cys-42 is a binding site for Zn(2+). Positions 44–54 (ATVQGLPHIGH) match the 'HIGH' region motif. Cys-220, His-245, and Glu-249 together coordinate Zn(2+). The short motif at 276–280 (KMSKS) is the 'KMSKS' region element. Lys-279 provides a ligand contact to ATP.

It belongs to the class-I aminoacyl-tRNA synthetase family. Monomer. Zn(2+) is required as a cofactor.

The protein resides in the cytoplasm. The enzyme catalyses tRNA(Cys) + L-cysteine + ATP = L-cysteinyl-tRNA(Cys) + AMP + diphosphate. The polypeptide is Cysteine--tRNA ligase (Mycolicibacterium smegmatis (strain ATCC 700084 / mc(2)155) (Mycobacterium smegmatis)).